The primary structure comprises 540 residues: NADH-ubiquinone oxidoreductase chain 4 (540 aa).

A run of 14 helical transmembrane segments spans residues 2-22 (TIIAISIMNVVIGIAILGVIL), 35-55 (IFILGVQGILIVLSGIMLIGC), 89-109 (ISAIFIFLTIILILSCNLISI), 118-138 (QKFQIMLLLTEILIINFFAAT), 140-160 (LVQLYIVYEATLIPMVIMIGV), 172-192 (FQILIYTLIGSIFMLMSIGIL), 218-238 (LIFIGFFIGFAVKIPIAPLHL), 248-268 (PTAGSVLLAGILLKLGGYGYI), 282-302 (YFPIIGGICLISILYTGIATL), 310-330 (IVAYSSISHMNVIVLGLFSGV), 338-358 (IILMIGHGVVSGGLFLCIGVI), 376-396 (VMPIMAILFFLLVLGNIAFPI), 415-435 (IIIAFFSALSMIVTAIYSFWL), and 501-521 (VNIFEFTSISLMVIMMIIIGM).

This sequence belongs to the complex I subunit 4 family.

The protein resides in the mitochondrion membrane. The enzyme catalyses a ubiquinone + NADH + 5 H(+)(in) = a ubiquinol + NAD(+) + 4 H(+)(out). Core subunit of the mitochondrial membrane respiratory chain NADH dehydrogenase (Complex I) that is believed to belong to the minimal assembly required for catalysis. Complex I functions in the transfer of electrons from NADH to the respiratory chain. The immediate electron acceptor for the enzyme is believed to be ubiquinone. The chain is NADH-ubiquinone oxidoreductase chain 4 (nad4) from Dictyostelium discoideum (Social amoeba).